The following is a 61-amino-acid chain: Small ribosomal subunit protein bS21 (61 aa).

The segment at Lys-34 to Lys-61 is disordered. A compositionally biased stretch (basic residues) spans Val-43–Lys-61.

It belongs to the bacterial ribosomal protein bS21 family.

This chain is Small ribosomal subunit protein bS21, found in Thermoanaerobacter pseudethanolicus (strain ATCC 33223 / 39E) (Clostridium thermohydrosulfuricum).